A 160-amino-acid chain; its full sequence is Cytochrome b6-f complex subunit 4 (160 aa).

The next 3 membrane-spanning stretches (helical) occupy residues Leu36–Val56, Leu95–Glu115, and Ile128–Cys148.

The protein belongs to the cytochrome b family. PetD subfamily. The 4 large subunits of the cytochrome b6-f complex are cytochrome b6, subunit IV (17 kDa polypeptide, PetD), cytochrome f and the Rieske protein, while the 4 small subunits are PetG, PetL, PetM and PetN. The complex functions as a dimer.

It localises to the cellular thylakoid membrane. Its function is as follows. Component of the cytochrome b6-f complex, which mediates electron transfer between photosystem II (PSII) and photosystem I (PSI), cyclic electron flow around PSI, and state transitions. This chain is Cytochrome b6-f complex subunit 4, found in Prochlorococcus marinus (strain MIT 9303).